The sequence spans 525 residues: GMP synthase [glutamine-hydrolyzing] (525 aa).

A Glutamine amidotransferase type-1 domain is found at 9–207; sequence RILILDFGSQ…ILDICGCEAL (199 aa). C86 functions as the Nucleophile in the catalytic mechanism. Catalysis depends on residues H181 and E183. The GMPS ATP-PPase domain occupies 208 to 400; it reads WTPSKIAEDA…LGLPYDMVYR (193 aa). An ATP-binding site is contributed by 235-241; it reads SGGVDSS.

As to quaternary structure, homodimer.

It catalyses the reaction XMP + L-glutamine + ATP + H2O = GMP + L-glutamate + AMP + diphosphate + 2 H(+). It functions in the pathway purine metabolism; GMP biosynthesis; GMP from XMP (L-Gln route): step 1/1. Its function is as follows. Catalyzes the synthesis of GMP from XMP. This chain is GMP synthase [glutamine-hydrolyzing], found in Pseudomonas syringae pv. syringae (strain B728a).